The following is a 616-amino-acid chain: UDP-sugar pyrophosphorylase (616 aa).

The protein belongs to the USP family. The cofactor is Mg(2+). Requires Mn(2+) as cofactor.

It catalyses the reaction a monosaccharide 1-phosphate + UTP + H(+) = a UDP-monosaccharide + diphosphate. In terms of biological role, may function as the terminal enzyme of the myo-inositol oxidation (MIO) pathway. May also play a role in the salvage pathway for synthesis of nucleotide sugars. This chain is UDP-sugar pyrophosphorylase (USP), found in Oryza sativa subsp. japonica (Rice).